Reading from the N-terminus, the 474-residue chain is ATP synthase subunit beta 1 (474 aa).

157–164 contributes to the ATP binding site; it reads GGAGVGKT.

The protein belongs to the ATPase alpha/beta chains family. As to quaternary structure, F-type ATPases have 2 components, CF(1) - the catalytic core - and CF(0) - the membrane proton channel. CF(1) has five subunits: alpha(3), beta(3), gamma(1), delta(1), epsilon(1). CF(0) has three main subunits: a(1), b(2) and c(9-12). The alpha and beta chains form an alternating ring which encloses part of the gamma chain. CF(1) is attached to CF(0) by a central stalk formed by the gamma and epsilon chains, while a peripheral stalk is formed by the delta and b chains.

The protein localises to the cell inner membrane. The catalysed reaction is ATP + H2O + 4 H(+)(in) = ADP + phosphate + 5 H(+)(out). In terms of biological role, produces ATP from ADP in the presence of a proton gradient across the membrane. The catalytic sites are hosted primarily by the beta subunits. The chain is ATP synthase subunit beta 1 from Albidiferax ferrireducens (strain ATCC BAA-621 / DSM 15236 / T118) (Rhodoferax ferrireducens).